The primary structure comprises 476 residues: Aspartyl/glutamyl-tRNA(Asn/Gln) amidotransferase subunit B (476 aa).

It belongs to the GatB/GatE family. GatB subfamily. As to quaternary structure, heterotrimer of A, B and C subunits.

It carries out the reaction L-glutamyl-tRNA(Gln) + L-glutamine + ATP + H2O = L-glutaminyl-tRNA(Gln) + L-glutamate + ADP + phosphate + H(+). It catalyses the reaction L-aspartyl-tRNA(Asn) + L-glutamine + ATP + H2O = L-asparaginyl-tRNA(Asn) + L-glutamate + ADP + phosphate + 2 H(+). In terms of biological role, allows the formation of correctly charged Asn-tRNA(Asn) or Gln-tRNA(Gln) through the transamidation of misacylated Asp-tRNA(Asn) or Glu-tRNA(Gln) in organisms which lack either or both of asparaginyl-tRNA or glutaminyl-tRNA synthetases. The reaction takes place in the presence of glutamine and ATP through an activated phospho-Asp-tRNA(Asn) or phospho-Glu-tRNA(Gln). This Lacticaseibacillus casei (strain BL23) (Lactobacillus casei) protein is Aspartyl/glutamyl-tRNA(Asn/Gln) amidotransferase subunit B.